The sequence spans 402 residues: Acetate kinase (402 aa).

A Mg(2+)-binding site is contributed by Asn-7. An ATP-binding site is contributed by Lys-14. Residue Arg-95 coordinates substrate. The Proton donor/acceptor role is filled by Asp-152. ATP contacts are provided by residues 212–216 (HLGNG), 286–288 (DMR), and 334–338 (GIGEN). Position 388 (Glu-388) interacts with Mg(2+).

Belongs to the acetokinase family. Homodimer. It depends on Mg(2+) as a cofactor. The cofactor is Mn(2+).

It localises to the cytoplasm. It catalyses the reaction acetate + ATP = acetyl phosphate + ADP. Its pathway is metabolic intermediate biosynthesis; acetyl-CoA biosynthesis; acetyl-CoA from acetate: step 1/2. Its function is as follows. Catalyzes the formation of acetyl phosphate from acetate and ATP. Can also catalyze the reverse reaction. This chain is Acetate kinase, found in Oleidesulfovibrio alaskensis (strain ATCC BAA-1058 / DSM 17464 / G20) (Desulfovibrio alaskensis).